The sequence spans 260 residues: Carbonic anhydrase 3 (260 aa).

A2 carries the post-translational modification N-acetylalanine. Residues 3 to 259 (KEWGYADHNG…IKGRIVKASF (257 aa)) enclose the Alpha-carbonic anhydrase domain. Phosphoserine is present on residues S29, S43, S50, and S55. Positions 64 to 67 (KTCR) are involved in proton transfer. T73 carries the post-translational modification Phosphothreonine. Residues H94, H96, and H119 each contribute to the Zn(2+) site. Residue Y127 is modified to Phosphotyrosine. S-glutathionyl cysteine occurs at positions 182 and 187. 198 to 199 (TT) provides a ligand contact to substrate. At T216 the chain carries Phosphothreonine. Residue S219 is modified to Phosphoserine.

It belongs to the alpha-carbonic anhydrase family. The cofactor is Zn(2+). In terms of processing, S-thiolated both by thiol-disulfide exchange with glutathione disulfide and by oxyradical-initiated S-thiolation with reduced glutathione. Post-translationally, S-glutathionylated in hepatocytes under oxidative stress.

It localises to the cytoplasm. It catalyses the reaction hydrogencarbonate + H(+) = CO2 + H2O. Its activity is regulated as follows. Inhibited by acetazolamide. Functionally, reversible hydration of carbon dioxide. This chain is Carbonic anhydrase 3 (CA3), found in Bos taurus (Bovine).